A 433-amino-acid chain; its full sequence is Serine hydroxymethyltransferase (433 aa).

A (6S)-5,6,7,8-tetrahydrofolate-binding site is contributed by 121–123; that stretch reads AHV. Position 227 is an N6-(pyridoxal phosphate)lysine (lysine 227). Glutamate 243 is a (6S)-5,6,7,8-tetrahydrofolate binding site.

This sequence belongs to the SHMT family. In terms of assembly, homodimer. It depends on pyridoxal 5'-phosphate as a cofactor.

The protein localises to the cytoplasm. Its pathway is amino-acid biosynthesis; glycine biosynthesis; glycine from L-serine: step 1/1. Its function is as follows. Catalyzes the reversible interconversion of serine and glycine with a modified folate serving as the one-carbon carrier. Also exhibits a pteridine-independent aldolase activity toward beta-hydroxyamino acids, producing glycine and aldehydes, via a retro-aldol mechanism. This chain is Serine hydroxymethyltransferase, found in Saccharolobus islandicus (strain Y.G.57.14 / Yellowstone #1) (Sulfolobus islandicus).